We begin with the raw amino-acid sequence, 105 residues long: Heat shock protein HspQ (105 aa).

It belongs to the HspQ family.

The protein localises to the cytoplasm. Involved in the degradation of certain denaturated proteins, including DnaA, during heat shock stress. This chain is Heat shock protein HspQ, found in Blochmanniella pennsylvanica (strain BPEN).